The following is a 901-amino-acid chain: Protein translocase subunit SecA (901 aa).

ATP contacts are provided by residues glutamine 89, 107 to 111 (GEGKT), and aspartate 502. A disordered region spans residues 838–883 (YQQQQAETEAQMHPEHEEAEGGEVSGRVAGFDETDPTTWGNPSRND). 4 residues coordinate Zn(2+): cysteine 885, cysteine 887, cysteine 896, and histidine 897.

It belongs to the SecA family. As to quaternary structure, monomer and homodimer. Part of the essential Sec protein translocation apparatus which comprises SecA, SecYEG and auxiliary proteins SecDF-YajC and YidC. Zn(2+) is required as a cofactor.

Its subcellular location is the cell inner membrane. It is found in the cytoplasm. It catalyses the reaction ATP + H2O + cellular proteinSide 1 = ADP + phosphate + cellular proteinSide 2.. In terms of biological role, part of the Sec protein translocase complex. Interacts with the SecYEG preprotein conducting channel. Has a central role in coupling the hydrolysis of ATP to the transfer of proteins into and across the cell membrane, serving both as a receptor for the preprotein-SecB complex and as an ATP-driven molecular motor driving the stepwise translocation of polypeptide chains across the membrane. The sequence is that of Protein translocase subunit SecA from Paracoccus denitrificans (strain Pd 1222).